A 258-amino-acid chain; its full sequence is Imidazole glycerol phosphate synthase subunit HisF (258 aa).

Active-site residues include D11 and D130.

It belongs to the HisA/HisF family. In terms of assembly, heterodimer of HisH and HisF.

It localises to the cytoplasm. The catalysed reaction is 5-[(5-phospho-1-deoxy-D-ribulos-1-ylimino)methylamino]-1-(5-phospho-beta-D-ribosyl)imidazole-4-carboxamide + L-glutamine = D-erythro-1-(imidazol-4-yl)glycerol 3-phosphate + 5-amino-1-(5-phospho-beta-D-ribosyl)imidazole-4-carboxamide + L-glutamate + H(+). It participates in amino-acid biosynthesis; L-histidine biosynthesis; L-histidine from 5-phospho-alpha-D-ribose 1-diphosphate: step 5/9. IGPS catalyzes the conversion of PRFAR and glutamine to IGP, AICAR and glutamate. The HisF subunit catalyzes the cyclization activity that produces IGP and AICAR from PRFAR using the ammonia provided by the HisH subunit. This chain is Imidazole glycerol phosphate synthase subunit HisF, found in Yersinia enterocolitica serotype O:8 / biotype 1B (strain NCTC 13174 / 8081).